The chain runs to 1478 residues: Fanconi anemia group D2 protein homolog (1478 aa).

A disordered region spans residues 33–53; the sequence is NISVESSSGGSEENIPASQEH. Positions 35–45 are enriched in low complexity; sequence SVESSSGGSEE. Lys-595 is covalently cross-linked (Glycyl lysine isopeptide (Lys-Gly) (interchain with G-Cter in ubiquitin)). 2 disordered regions span residues 896-918 and 1420-1478; these read NQNQKRPGPKPAAKLNATLPEPD and TPRS…SKCF. Residues 1429 to 1442 show a composition bias toward acidic residues; sequence ENSDDELPADDTSV. The segment covering 1468–1478 has biased composition (basic residues); the sequence is RSKSSSRSKCF.

Belongs to the Fanconi anemia protein FANCD2 family. As to quaternary structure, homodimer; cannot be ubiquitinated and does not bind DNA. Part of a Fanci-Fancd2 heterodimeric complex that binds and scans dsDNA for DNA damage. Interacts with Fancl (via C-terminus). In terms of processing, monoubiquitinated by Fancl in response to ionising radiation.

It is found in the nucleus. Functionally, required for maintenance of chromosomal stability. Together with Fancl, and probably Fanci, involved in DNA repair of damage caused by agents that induce interstrand cross-links but not agents that cause double strand breaks. Required for S phase checkpoint activation in response to ionizing radiation induced DNA damage. This is Fanconi anemia group D2 protein homolog from Drosophila melanogaster (Fruit fly).